The chain runs to 209 residues: Uracil phosphoribosyltransferase (209 aa).

5-phospho-alpha-D-ribose 1-diphosphate-binding positions include Arg79, Arg104, and 131-139 (DPMLATGGS). Uracil is bound by residues Ile194 and 199-201 (GDA). A 5-phospho-alpha-D-ribose 1-diphosphate-binding site is contributed by Asp200.

It belongs to the UPRTase family. Mg(2+) is required as a cofactor.

The enzyme catalyses UMP + diphosphate = 5-phospho-alpha-D-ribose 1-diphosphate + uracil. It participates in pyrimidine metabolism; UMP biosynthesis via salvage pathway; UMP from uracil: step 1/1. Allosterically activated by GTP. Its function is as follows. Catalyzes the conversion of uracil and 5-phospho-alpha-D-ribose 1-diphosphate (PRPP) to UMP and diphosphate. This chain is Uracil phosphoribosyltransferase, found in Clostridium acetobutylicum (strain ATCC 824 / DSM 792 / JCM 1419 / IAM 19013 / LMG 5710 / NBRC 13948 / NRRL B-527 / VKM B-1787 / 2291 / W).